The sequence spans 278 residues: Probable NADP-dependent mannitol dehydrogenase (278 aa).

Positions 45, 117, and 152 each coordinate NADP(+). Residues Ser-171 and Tyr-186 each act as proton donor in the active site. Tyr-186, Lys-190, and Thr-220 together coordinate NADP(+). Residue Lys-190 is the Lowers pKa of active site Tyr of the active site.

The protein belongs to the short-chain dehydrogenases/reductases (SDR) family. As to quaternary structure, homotetramer.

The enzyme catalyses D-mannitol + NADP(+) = D-fructose + NADPH + H(+). Its function is as follows. Versatile oxidoreductase that catalyzes the oxidation and reduction of polar as well as non-polar substrates at a very broad pH range. Preferentially oxidizes secondary alcohols. Has highest activity for racemic 2-heptanol and racemic octanol. Is also an efficient reductase for selected substrates. Substrate selectivity was found for medium chain length ketones with the carbonyl function at position C-2. Has highest activities for ribulose and fructose. The enzyme is (R)-selective in the reduction direction and produces exclusively the (R)-enantiomer. This Yarrowia lipolytica (strain CLIB 122 / E 150) (Yeast) protein is Probable NADP-dependent mannitol dehydrogenase.